A 531-amino-acid chain; its full sequence is Bifunctional protein TrpGD (531 aa).

The Glutamine amidotransferase type-1 domain occupies 3-196 (DILLLDNIDS…LAWAQQKLEP (194 aa)). L-glutamine is bound at residue 57–59 (GPG). The active-site Nucleophile; for GATase activity is Cys84. L-glutamine contacts are provided by residues Gln88 and 134-135 (SL). Catalysis depends on for GATase activity residues His170 and Glu172. The tract at residues 202–531 (PILEKLYQAQ…DRVTALAARG (330 aa)) is anthranilate phosphoribosyltransferase.

The protein in the C-terminal section; belongs to the anthranilate phosphoribosyltransferase family. Heterotetramer consisting of two non-identical subunits: a beta subunit (TrpG) and a large alpha subunit (TrpE).

The enzyme catalyses chorismate + L-glutamine = anthranilate + pyruvate + L-glutamate + H(+). The catalysed reaction is N-(5-phospho-beta-D-ribosyl)anthranilate + diphosphate = 5-phospho-alpha-D-ribose 1-diphosphate + anthranilate. It participates in amino-acid biosynthesis; L-tryptophan biosynthesis; L-tryptophan from chorismate: step 1/5. Its pathway is amino-acid biosynthesis; L-tryptophan biosynthesis; L-tryptophan from chorismate: step 2/5. Its activity is regulated as follows. Cooperatively feedback inhibited by tryptophan. Part of a heterotetrameric complex that catalyzes the two-step biosynthesis of anthranilate, an intermediate in the biosynthesis of L-tryptophan. In the first step, the glutamine-binding beta subunit (TrpG) of anthranilate synthase (AS) provides the glutamine amidotransferase activity which generates ammonia as a substrate that, along with chorismate, is used in the second step, catalyzed by the large alpha subunit of AS (TrpE) to produce anthranilate. In the absence of TrpG, TrpE can synthesize anthranilate directly from chorismate and high concentrations of ammonia. In addition to synthesizing anthranilate, it also catalyzes the second step of the pathway, the transfer of the phosphoribosyl group of 5-phosphorylribose-1-pyrophosphate (PRPP) to anthranilate. This is Bifunctional protein TrpGD (trpGD) from Escherichia coli (strain K12).